The chain runs to 376 residues: Formate dehydrogenase 1 (376 aa).

Positions 97 and 121 each coordinate substrate. NAD(+)-binding positions include 176–177 (RI), aspartate 197, 244–248 (PLHKD), threonine 270, aspartate 296, and 325–328 (HISG).

The protein belongs to the D-isomer specific 2-hydroxyacid dehydrogenase family. FDH subfamily. As to quaternary structure, homodimer.

It is found in the cytoplasm. It carries out the reaction formate + NAD(+) = CO2 + NADH. In terms of biological role, catalyzes the NAD(+)-dependent oxidation of formate to carbon dioxide. Formate oxidation is the final step in the methanol oxidation pathway in methylotrophic microorganisms. Has a role in the detoxification of exogenous formate in non-methylotrophic organisms. The polypeptide is Formate dehydrogenase 1 (FDH1) (Saccharomyces cerevisiae (strain YJM789) (Baker's yeast)).